The following is a 525-amino-acid chain: GMP synthase [glutamine-hydrolyzing] (525 aa).

The region spanning 9–207 is the Glutamine amidotransferase type-1 domain; it reads RILILDFGSQ…ILDICGCEAL (199 aa). Cysteine 86 serves as the catalytic Nucleophile. Residues histidine 181 and glutamate 183 contribute to the active site. The region spanning 208 to 400 is the GMPS ATP-PPase domain; it reads WTPSKIAEDA…LGLPYDMVYR (193 aa). An ATP-binding site is contributed by 235–241; sequence SGGVDSS.

Homodimer.

The enzyme catalyses XMP + L-glutamine + ATP + H2O = GMP + L-glutamate + AMP + diphosphate + 2 H(+). Its pathway is purine metabolism; GMP biosynthesis; GMP from XMP (L-Gln route): step 1/1. Functionally, catalyzes the synthesis of GMP from XMP. The polypeptide is GMP synthase [glutamine-hydrolyzing] (Pseudomonas syringae pv. syringae (strain B728a)).